Consider the following 123-residue polypeptide: Ribosome-binding factor A (123 aa).

It belongs to the RbfA family. Monomer. Binds 30S ribosomal subunits, but not 50S ribosomal subunits or 70S ribosomes.

Its subcellular location is the cytoplasm. One of several proteins that assist in the late maturation steps of the functional core of the 30S ribosomal subunit. Associates with free 30S ribosomal subunits (but not with 30S subunits that are part of 70S ribosomes or polysomes). Required for efficient processing of 16S rRNA. May interact with the 5'-terminal helix region of 16S rRNA. The sequence is that of Ribosome-binding factor A from Desulfatibacillum aliphaticivorans.